Consider the following 249-residue polypeptide: Proteasome subunit alpha type-7 (249 aa).

This sequence belongs to the peptidase T1A family. As to quaternary structure, the 26S proteasome consists of a 20S proteasome core and two 19S regulatory subunits. The 20S proteasome core is a barrel-shaped complex made of 28 subunits that are arranged in four stacked rings. The two outer rings are each formed by seven alpha subunits, and the two inner rings are formed by seven beta subunits. The proteolytic activity is exerted by three beta-subunits PSMB5, PSMB6 and PSMB7. PSMA7 interacts directly with the PSMG1-PSMG2 heterodimer which promotes 20S proteasome assembly. Interacts with HIF1A. Interacts with RAB7A. Interacts with PRKN. Interacts with ABL1 and ABL2. Interacts with EMAP2. Interacts with MAVS.

Its subcellular location is the cytoplasm. It is found in the nucleus. In terms of biological role, component of the 20S core proteasome complex involved in the proteolytic degradation of most intracellular proteins. This complex plays numerous essential roles within the cell by associating with different regulatory particles. Associated with two 19S regulatory particles, forms the 26S proteasome and thus participates in the ATP-dependent degradation of ubiquitinated proteins. The 26S proteasome plays a key role in the maintenance of protein homeostasis by removing misfolded or damaged proteins that could impair cellular functions, and by removing proteins whose functions are no longer required. Associated with the PA200 or PA28, the 20S proteasome mediates ubiquitin-independent protein degradation. This type of proteolysis is required in several pathways including spermatogenesis (20S-PA200 complex) or generation of a subset of MHC class I-presented antigenic peptides (20S-PA28 complex). Inhibits the transactivation function of HIF-1A under both normoxic and hypoxia-mimicking conditions. The interaction with EMAP2 increases the proteasome-mediated HIF-1A degradation under the hypoxic conditions. Plays a role in hepatitis C virus internal ribosome entry site-mediated translation. Mediates nuclear translocation of the androgen receptor (AR) and thereby enhances androgen-mediated transactivation. Promotes MAVS degradation and thereby negatively regulates MAVS-mediated innate immune response. In Gallus gallus (Chicken), this protein is Proteasome subunit alpha type-7 (PSMA7).